The following is a 215-amino-acid chain: UPF0502 protein YceH (215 aa).

Lys-80 is modified (N6-acetyllysine).

Belongs to the UPF0502 family.

The sequence is that of UPF0502 protein YceH from Escherichia fergusonii (strain ATCC 35469 / DSM 13698 / CCUG 18766 / IAM 14443 / JCM 21226 / LMG 7866 / NBRC 102419 / NCTC 12128 / CDC 0568-73).